The sequence spans 116 residues: Large ribosomal subunit protein bL19 (116 aa).

It belongs to the bacterial ribosomal protein bL19 family.

This protein is located at the 30S-50S ribosomal subunit interface and may play a role in the structure and function of the aminoacyl-tRNA binding site. The protein is Large ribosomal subunit protein bL19 of Syntrophomonas wolfei subsp. wolfei (strain DSM 2245B / Goettingen).